An 87-amino-acid chain; its full sequence is Insulin-related peptide 1 (87 aa).

Positions 1-19 (MKSFMVFVLIFACFSCYYA) are cleaved as a signal peptide. A propeptide spanning residues 20-44 (QESTNFYCGRTLSRALAVLCYGAES) is cleaved from the precursor. Residue arginine 64 is modified to Arginine amide. Residues 68–87 (GPVDECCEKACSIQELMTYC) constitute a propeptide that is removed on maturation.

This sequence belongs to the insulin family. As to expression, DAGWWIPQHGHHALAGVR-amide: Expressed in corpora cardiaca (CC), corpora allata (CA), antennal lobe (AL) and gnathal ganglion (GNG) (at protein level). Expression in CC and CA detected in most animals, in AL and GNG in few animals (at protein level).

The protein localises to the secreted. This is Insulin-related peptide 1 from Agrotis ipsilon (Black cutworm moth).